The sequence spans 160 residues: MQPASAKWYDRRDYVFIEFCVEDSKDVNVNFEKSKLTFSCLGGSDNFKHLNEIDLFHCIDPNDSKHKRTDRSILCCLRKGESGQSWPRLTKERAKLNWLSVDFNNWKDWEDDSDEDMSNFDRFSEMMDHMGGDEDVDLPEVDGADDDSQDSDDEKMPDLE.

The region spanning 1–90 (MQPASAKWYD…ESGQSWPRLT (90 aa)) is the CS domain. Residue Lys33 is modified to N6-acetyllysine. Lys35 participates in a covalent cross-link: Glycyl lysine isopeptide (Lys-Gly) (interchain with G-Cter in SUMO2). Ser44 carries the post-translational modification Phosphoserine. Lys65 participates in a covalent cross-link: Glycyl lysine isopeptide (Lys-Gly) (interchain with G-Cter in SUMO2). Phosphoserine is present on residues Ser85, Ser100, Ser113, and Ser118. The segment at 118-160 (SNFDRFSEMMDHMGGDEDVDLPEVDGADDDSQDSDDEKMPDLE) is disordered. A compositionally biased stretch (basic and acidic residues) spans 122 to 132 (RFSEMMDHMGG). Residues 133–153 (DEDVDLPEVDGADDDSQDSDD) are compositionally biased toward acidic residues. 2 positions are modified to phosphoserine: Ser148 and Ser151. Positions 157-160 (PDLE) match the PXLE motif motif.

Belongs to the p23/wos2 family. In terms of assembly, probably forms a complex composed of chaperones HSP90 and HSP70, co-chaperones STIP1/HOP, CDC37, PPP5C, PTGES3/p23, TSC1 and client protein TSC2. Binds to the progesterone receptor. Interacts with TERT; the interaction, together with HSP90AA1, is required for correct assembly and stabilization of the telomerase holoenzyme complex. Interacts (via PXLE motif) with EGLN1/PHD2, recruiting EGLN1/PHD2 to the HSP90 pathway to facilitate HIF alpha proteins hydroxylation. Interacts with HSP90AA1, FLCN, FNIP1 and FNIP2. In terms of processing, proteolytically cleaved by caspase-7 (CASP7) in response to apoptosis, leading to its inactivation. Expressed in testis, kidney, bladder and ovary.

The protein localises to the cytoplasm. It catalyses the reaction prostaglandin H2 = prostaglandin E2. The protein operates within lipid metabolism; prostaglandin biosynthesis. Its function is as follows. Cytosolic prostaglandin synthase that catalyzes the oxidoreduction of prostaglandin endoperoxide H2 (PGH2) to prostaglandin E2 (PGE2). Molecular chaperone that localizes to genomic response elements in a hormone-dependent manner and disrupts receptor-mediated transcriptional activation, by promoting disassembly of transcriptional regulatory complexes. Facilitates HIF alpha proteins hydroxylation via interaction with EGLN1/PHD2, leading to recruit EGLN1/PHD2 to the HSP90 pathway. This is Prostaglandin E synthase 3 (Ptges3) from Mus musculus (Mouse).